The sequence spans 381 residues: Creatine kinase B-type (381 aa).

Ser4 carries the post-translational modification Phosphoserine. Residues 11–98 (KLRFPAEDEF…FDPIIEDRHG (88 aa)) form the Phosphagen kinase N-terminal domain. Thr35 carries the phosphothreonine modification. Lys45 is covalently cross-linked (Glycyl lysine isopeptide (Lys-Gly) (interchain with G-Cter in ubiquitin)). Val72 contributes to the creatine binding site. Positions 96–110 (RHGGYKPSDEHKTDL) are enriched in basic and acidic residues. Residues 96–123 (RHGGYKPSDEHKTDLNPDNLQGGDDLDP) form a disordered region. Residues Lys101 and Lys107 each participate in a glycyl lysine isopeptide (Lys-Gly) (interchain with G-Cter in ubiquitin) cross-link. Tyr125 is modified (phosphotyrosine). A Phosphagen kinase C-terminal domain is found at 125 to 367 (YVLSSRVRTG…KLLIEMEQRL (243 aa)). Residues 128–132 (SSRVR), Arg130, Arg132, and His191 contribute to the ATP site. Positions 130-138 (RVRTGRSIR) are internal MTS-like signal. At Ser199 the chain carries Phosphoserine. Glu232 is a creatine binding site. Residue Arg236 participates in ATP binding. The residue at position 269 (Tyr269) is a 3'-nitrotyrosine. Position 285 (Ser285) interacts with creatine. Residues Arg292, 292 to 296 (RAGVH), Arg320, 320 to 325 (RGTGGV), and Asp335 each bind ATP. Thr322 carries the post-translational modification Phosphothreonine. Residue Lys381 forms a Glycyl lysine isopeptide (Lys-Gly) (interchain with G-Cter in ubiquitin) linkage.

It belongs to the ATP:guanido phosphotransferase family. In terms of assembly, dimer of identical or non-identical chains, which can be either B (brain type) or M (muscle type). With MM being the major form in skeletal muscle and myocardium, MB existing in myocardium, and BB existing in many tissues, especially brain. Interacts with SLC12A6 (via C-terminus); the interaction may be required for SLC12A6 potassium-chloride cotransport activity. In terms of processing, ubiquitinated by the ECS(ASB9) complex, leading to its degradation by the proteasome.

The protein localises to the cytoplasm. Its subcellular location is the cytosol. The protein resides in the mitochondrion. It is found in the cell membrane. It catalyses the reaction creatine + ATP = N-phosphocreatine + ADP + H(+). In terms of biological role, reversibly catalyzes the transfer of phosphate between ATP and various phosphogens (e.g. creatine phosphate). Creatine kinase isoenzymes play a central role in energy transduction in tissues with large, fluctuating energy demands, such as skeletal muscle, heart, brain and spermatozoa. Acts as a key regulator of adaptive thermogenesis as part of the futile creatine cycle: localizes to the mitochondria of thermogenic fat cells and acts by mediating phosphorylation of creatine to initiate a futile cycle of creatine phosphorylation and dephosphorylation. During the futile creatine cycle, creatine and N-phosphocreatine are in a futile cycle, which dissipates the high energy charge of N-phosphocreatine as heat without performing any mechanical or chemical work. The chain is Creatine kinase B-type (CKB) from Sus scrofa (Pig).